Reading from the N-terminus, the 594-residue chain is Putative phospholipase B-like 2 (594 aa).

An N-terminal signal peptide occupies residues 1–46 (MAAPVDGSSGGWAARALRRALALTSLTTLALLASLTGLLLSGPAGA). Residues N93 and N115 are each glycosylated (N-linked (GlcNAc...) asparagine). C147 and C157 are disulfide-bonded. N236 and N441 each carry an N-linked (GlcNAc...) asparagine glycan. C497 and C500 are disulfide-bonded. N-linked (GlcNAc...) asparagine glycosylation is present at N520.

It belongs to the phospholipase B-like family. In terms of assembly, interacts with IGF2R. Post-translationally, the p76 protein is synthesized as a 76 kDa precursor which is then processed into a N-terminal 28 kDa form and a C-terminal 40 kDa form. The C-terminal peptide is further processed into a 15 kDa form. In terms of processing, glycosylated; contains mannose 6-phosphate sugars. In terms of tissue distribution, present at highest levels in spleen, lung and brain (at protein level).

The protein resides in the lysosome lumen. In terms of biological role, putative phospholipase. The sequence is that of Putative phospholipase B-like 2 (Plbd2) from Mus musculus (Mouse).